A 181-amino-acid polypeptide reads, in one-letter code: Large ribosomal subunit protein uL6 (181 aa).

Belongs to the universal ribosomal protein uL6 family. In terms of assembly, part of the 50S ribosomal subunit.

This protein binds to the 23S rRNA, and is important in its secondary structure. It is located near the subunit interface in the base of the L7/L12 stalk, and near the tRNA binding site of the peptidyltransferase center. The protein is Large ribosomal subunit protein uL6 of Hydrogenobaculum sp. (strain Y04AAS1).